Consider the following 799-residue polypeptide: Integrin beta-1 (799 aa).

The signal sequence occupies residues 1 to 20 (MNLQLVFWIGLISLICSVFG). At 21–729 (QTDKNRCLKA…ETPDCPTGPD (709 aa)) the chain is on the extracellular side. The 51-residue stretch at 26-76 (RCLKANAKSCGECIQAGPNCGWCTNTTFLQEGMPTSARCDDLEALKKKGCH) folds into the PSI domain. Disulfide bonds link Cys-27–Cys-45, Cys-35–Cys-465, Cys-38–Cys-64, Cys-48–Cys-75, Cys-207–Cys-213, Cys-261–Cys-301, Cys-401–Cys-415, Cys-435–Cys-463, Cys-467–Cys-487, Cys-478–Cys-490, Cys-492–Cys-501, Cys-503–Cys-534, Cys-517–Cys-532, Cys-526–Cys-537, Cys-539–Cys-554, Cys-556–Cys-577, Cys-561–Cys-575, Cys-569–Cys-580, Cys-582–Cys-591, Cys-593–Cys-616, Cys-600–Cys-614, Cys-608–Cys-619, Cys-621–Cys-631, Cys-634–Cys-637, Cys-641–Cys-692, Cys-647–Cys-666, Cys-650–Cys-662, and Cys-700–Cys-724. 3 N-linked (GlcNAc...) asparagine glycosylation sites follow: Asn-50, Asn-94, and Asn-97. A VWFA domain is found at 140–378 (DYPIDLYYLM…QLIIDAYNSL (239 aa)). The Mg(2+) site is built by Ser-152 and Ser-154. Residues Ser-154, Asp-157, Asp-158, and Glu-189 each coordinate Ca(2+). A CX3CL1-binding region spans residues 207-213 (CTSEQNC). N-linked (GlcNAc...) asparagine glycosylation occurs at Asn-212. Ca(2+) contacts are provided by Asn-244, Asp-246, Pro-248, and Glu-249. Glu-249 is a binding site for Mg(2+). N-linked (GlcNAc...) asparagine glycosylation is present at Asn-269. The interval 295–314 (LPNDGQCHLENNVYTMSHYY) is CX3CL1-binding. Gly-362 is a binding site for Ca(2+). 3 N-linked (GlcNAc...) asparagine glycosylation sites follow: Asn-363, Asn-406, and Asn-417. The interval 383-466 (ILENSKLPDG…VVLQFICKCN (84 aa)) is interaction with TMEM182. I-EGF domains follow at residues 467 to 502 (CQSHGIPASPKCHEGNGTFECGACRCNEGRVGRHCE), 503 to 555 (CSTD…KFCE), 556 to 592 (CDNFNCDRSNGLICGGNGVCRCRVCECYPNYTGSACD), and 593 to 632 (CSLDTVPCVATNGQICNGRGICECGACKCTDPKFQGPTCE). Asn-482 is a glycosylation site (N-linked (GlcNAc...) asparagine). Asn-521 carries N-linked (GlcNAc...) asparagine glycosylation. Asn-585 carries N-linked (GlcNAc...) asparagine glycosylation. A glycan (N-linked (GlcNAc...) asparagine) is linked at Asn-670. The helical transmembrane segment at 730–752 (IIPIVAGVVAGIVLIGLALLLIW) threads the bilayer. Residues 753-799 (KLLMIIHDRREFAKFEKEKMNAKWDTGENPIYKSAVTTVVNPKYEGK) lie on the Cytoplasmic side of the membrane. The segment at 763 to 768 (EFAKFE) is signal for sorting from recycling endosomes; interaction with ACAP1. A Phosphothreonine modification is found at Thr-778. Tyr-784 carries the phosphotyrosine modification. Ser-786 carries the post-translational modification Phosphoserine. Residues 786-793 (SAVTTVVN) are interaction with ITGB1BP1. Phosphothreonine is present on Thr-790. Lys-795 carries the N6-acetyllysine; alternate modification. Lys-795 is covalently cross-linked (Glycyl lysine isopeptide (Lys-Gly) (interchain with G-Cter in SUMO1); alternate).

This sequence belongs to the integrin beta chain family. As to quaternary structure, interacts with seprase FAP (seprase); the interaction occurs at the cell surface of invadopodia membrane in a collagen-dependent manner. Heterodimer of an alpha and a beta subunit. Beta-1 associates with either alpha-1, alpha-2, alpha-3, alpha-4, alpha-5, alpha-6, alpha-7, alpha-8, alpha-9, alpha-10, alpha-11 or alpha-V. ITGA6:ITGB1 is found in a complex with CD9; interaction takes place in oocytes and is involved in sperm-egg fusion. Binds LGALS3BP and NMRK2, when associated with alpha-7, but not with alpha-5. Interacts with FLNA, FLNB, FLNC and RANBP9. Interacts with KRT1 in the presence of RACK1 and SRC. Interacts with JAML; integrin alpha-4/beta-1 may regulate leukocyte to endothelial cells adhesion by controlling JAML homodimerization. Interacts with RAB21. Interacts (via the cytoplasmic region) with RAB25 (via the hypervariable C-terminal region). Interacts with MYO10. Interacts with ITGB1BP1 (via C-terminal region); the interaction is a prerequisite for focal adhesion disassembly. Interacts with TLN1; the interaction is prevented by competitive binding of ITGB1BP1. Interacts with ACAP1; required for ITGB1 recycling. Interacts with ASAP3. Interacts with FERMT2; the interaction is inhibited in presence of ITGB1BP1. Interacts with DAB2. Interacts with FGR and HCK. Interacts with alpha-7A and alpha-7B in adult skeletal muscle. Interacts with alpha-7B in cardiomyocytes of adult heart. Interacts with EMP2; the interaction may be direct or indirect and ITGB1 has a heterodimer form. ITGA5:ITGB1 interacts with CCN3. ITGA4:ITGB1 is found in a ternary complex with CX3CR1 and CX3CL1. ITGA5:ITGB1 interacts with FBN1. ITGA5:ITGB1 acts as a receptor for fibronectin FN1 and mediates R-G-D-dependent cell adhesion to FN1. ITGA5:ITGB1 interacts with IL1B. Interacts with MDK. ITGA4:ITGB1 interacts with MDK; this interaction mediates MDK-induced osteoblast cells migration through PXN phosphorylation. ITGA6:ITGB1 interacts with MDK; this interaction mediates MDK-induced neurite-outgrowth. ITGA5:ITGB1 interacts with ACE2. Interacts with TMEM182 and LAMB1. Interacts with tensin TNS3; TNS3 also interacts with PEAK1, thus acting as an adapter molecule to bridge the association of PEAK1 with ITGB1. Interacts with tensin TNS4; the interaction displaces tensin TNS3 from the ITGB1 cytoplasmic tail and promotes ITGB1 stability. Integrin ITGA9:ITGB1 interacts with SPP1/OPN (via N-terminus). Integrin ITGA9:ITGB1 interacts with TNC/TNFN3 (via the 3rd Fibronectin type-III domain). Integrins ITGA4:ITGB1 and ITGA9:ITGB1 interact with SVEP1 (via Sushi domain 21); thereby inhibit Ca(2+) intracellular signaling and as a result repress vasocontraction. ITGA4:ITGB1 and ITGA5:ITGB1 interacts with SELP. ITGA5:ITGB1 interacts with IGFBP1. ITGA4:ITGB1 interacts with BCAM. Interacts with ADGRG6.

It localises to the cell membrane. It is found in the cell projection. Its subcellular location is the invadopodium membrane. The protein resides in the ruffle membrane. The protein localises to the recycling endosome. It localises to the melanosome. It is found in the lamellipodium. Its subcellular location is the ruffle. The protein resides in the cell junction. The protein localises to the focal adhesion. In terms of biological role, integrins alpha-1/beta-1, alpha-2/beta-1, alpha-10/beta-1 and alpha-11/beta-1 are receptors for collagen. Integrins alpha-1/beta-1 and alpha-2/beta-2 recognize the proline-hydroxylated sequence G-F-P-G-E-R in collagen. Integrins alpha-2/beta-1, alpha-3/beta-1, alpha-4/beta-1, alpha-5/beta-1, alpha-8/beta-1, alpha-10/beta-1, alpha-11/beta-1 and alpha-V/beta-1 are receptors for fibronectin. Alpha-4/beta-1 recognizes one or more domains within the alternatively spliced CS-1 and CS-5 regions of fibronectin. Integrin alpha-5/beta-1 is a receptor for fibrinogen. Integrin alpha-1/beta-1, alpha-2/beta-1, alpha-6/beta-1 and alpha-7/beta-1 are receptors for lamimin. Integrin alpha-6/beta-1 (ITGA6:ITGB1) is present in oocytes and is involved in sperm-egg fusion. Integrin alpha-4/beta-1 is a receptor for VCAM1 and recognizes the sequence Q-I-D-S in VCAM1. Integrin alpha-9/beta-1 is a receptor for VCAM1, cytotactin and osteopontin. It recognizes the sequence A-E-I-D-G-I-E-L in cytotactin. Integrin alpha-3/beta-1 is a receptor for epiligrin, thrombospondin and CSPG4. Integrin alpha-3/beta-1 provides a docking site for FAP (seprase) at invadopodia plasma membranes in a collagen-dependent manner and hence may participate in the adhesion, formation of invadopodia and matrix degradation processes, promoting cell invasion. Alpha-3/beta-1 may mediate with LGALS3 the stimulation by CSPG4 of endothelial cells migration. Integrin alpha-V/beta-1 is a receptor for vitronectin. Beta-1 integrins recognize the sequence R-G-D in a wide array of ligands. When associated with alpha-7/beta-1 integrin, regulates cell adhesion and laminin matrix deposition. Involved in promoting endothelial cell motility and angiogenesis. Involved in osteoblast compaction through the fibronectin fibrillogenesis cell-mediated matrix assembly process and the formation of mineralized bone nodules. May be involved in up-regulation of the activity of kinases such as PKC via binding to KRT1. Together with KRT1 and RACK1, serves as a platform for SRC activation or inactivation. Plays a mechanistic adhesive role during telophase, required for the successful completion of cytokinesis. ITGA4:ITGB1 binds to fractalkine (CX3CL1) and may act as its coreceptor in CX3CR1-dependent fractalkine signaling. ITGA4:ITGB1 and ITGA5:ITGB1 bind to PLA2G2A via a site (site 2) which is distinct from the classical ligand-binding site (site 1) and this induces integrin conformational changes and enhanced ligand binding to site 1. ITGA5:ITGB1 acts as a receptor for fibrillin-1 (FBN1) and mediates R-G-D-dependent cell adhesion to FBN1. ITGA5:ITGB1 is a receptor for IL1B and binding is essential for IL1B signaling. ITGA5:ITGB3 is a receptor for soluble CD40LG and is required for CD40/CD40LG signaling. Plays an important role in myoblast differentiation and fusion during skeletal myogenesis. ITGA9:ITGB1 may play a crucial role in SVEP1/polydom-mediated myoblast cell adhesion. Integrins ITGA9:ITGB1 and ITGA4:ITGB1 repress PRKCA-mediated L-type voltage-gated channel Ca(2+) influx and ROCK-mediated calcium sensitivity in vascular smooth muscle cells via their interaction with SVEP1, thereby inhibit vasocontraction. The protein is Integrin beta-1 (Itgb1) of Rattus norvegicus (Rat).